Consider the following 221-residue polypeptide: Cytidylate kinase 1 (221 aa).

7–15 (GPSASGKSS) contributes to the ATP binding site.

This sequence belongs to the cytidylate kinase family. Type 1 subfamily.

It is found in the cytoplasm. The catalysed reaction is CMP + ATP = CDP + ADP. The enzyme catalyses dCMP + ATP = dCDP + ADP. The polypeptide is Cytidylate kinase 1 (Borreliella afzelii (strain PKo) (Borrelia afzelii)).